Here is a 233-residue protein sequence, read N- to C-terminus: Purine nucleoside phosphorylase DeoD-type (233 aa).

His4 contributes to the a purine D-ribonucleoside binding site. Phosphate contacts are provided by residues Gly20, Arg24, Arg43, and 87–90 (RVGT). A purine D-ribonucleoside contacts are provided by residues Glu162, 179-181 (EME), and 203-204 (SD). Asp204 functions as the Proton donor in the catalytic mechanism.

Belongs to the PNP/UDP phosphorylase family. As to quaternary structure, homohexamer; trimer of homodimers.

The enzyme catalyses a purine D-ribonucleoside + phosphate = a purine nucleobase + alpha-D-ribose 1-phosphate. The catalysed reaction is a purine 2'-deoxy-D-ribonucleoside + phosphate = a purine nucleobase + 2-deoxy-alpha-D-ribose 1-phosphate. In terms of biological role, catalyzes the reversible phosphorolytic breakdown of the N-glycosidic bond in the beta-(deoxy)ribonucleoside molecules, with the formation of the corresponding free purine bases and pentose-1-phosphate. The sequence is that of Purine nucleoside phosphorylase DeoD-type from Alkaliphilus metalliredigens (strain QYMF).